The primary structure comprises 283 residues: Elongation factor Ts (283 aa).

The tract at residues 80 to 83 (TDFV) is involved in Mg(2+) ion dislocation from EF-Tu.

It belongs to the EF-Ts family.

It is found in the cytoplasm. Functionally, associates with the EF-Tu.GDP complex and induces the exchange of GDP to GTP. It remains bound to the aminoacyl-tRNA.EF-Tu.GTP complex up to the GTP hydrolysis stage on the ribosome. The polypeptide is Elongation factor Ts (Actinobacillus succinogenes (strain ATCC 55618 / DSM 22257 / CCUG 43843 / 130Z)).